The primary structure comprises 88 residues: Large ribosomal subunit protein bL31B (88 aa).

Belongs to the bacterial ribosomal protein bL31 family. Type B subfamily. Part of the 50S ribosomal subunit.

The protein is Large ribosomal subunit protein bL31B of Corynebacterium glutamicum (strain R).